Here is a 252-residue protein sequence, read N- to C-terminus: Flagellar brake protein YcgR (252 aa).

The region spanning 118–236 is the PilZ domain; the sequence is QRREYFRVSI…EKGLQRAIFE (119 aa).

It belongs to the YcgR family. Monomer. Interacts with the flagellar basal bodies.

It is found in the bacterial flagellum basal body. Acts as a flagellar brake, regulating swimming and swarming in a bis-(3'-5') cyclic diguanylic acid (c-di-GMP)-dependent manner. Binds 1 c-di-GMP dimer per subunit. Increasing levels of c-di-GMP lead to decreased motility. The polypeptide is Flagellar brake protein YcgR (Yersinia pseudotuberculosis serotype I (strain IP32953)).